Consider the following 351-residue polypeptide: Muscleblind-like protein 2a (351 aa).

C3H1-type zinc fingers lie at residues 13–41, 47–73, 177–205, and 213–239; these read WLTL…HPPK, NGRV…HPPA, TDKL…HPSD, and DNTV…HPPA.

Belongs to the muscleblind family. In terms of tissue distribution, expressed in fast and slow myotomal muscle, heart, liver, skin, brain and testis.

The protein resides in the nucleus. Its subcellular location is the cytoplasm. Involved in pre-mRNA alternative splicing regulation. RNA-binding protein that binds to 5'ACACCC-3' core sequence. The chain is Muscleblind-like protein 2a (mbnl2a) from Takifugu rubripes (Japanese pufferfish).